The primary structure comprises 164 residues: ATP synthase subunit b (164 aa).

A helical transmembrane segment spans residues 4 to 24 (IHFDLTLVVQVLSFLLLVYIL).

It belongs to the ATPase B chain family. As to quaternary structure, F-type ATPases have 2 components, F(1) - the catalytic core - and F(0) - the membrane proton channel. F(1) has five subunits: alpha(3), beta(3), gamma(1), delta(1), epsilon(1). F(0) has three main subunits: a(1), b(2) and c(10-14). The alpha and beta chains form an alternating ring which encloses part of the gamma chain. F(1) is attached to F(0) by a central stalk formed by the gamma and epsilon chains, while a peripheral stalk is formed by the delta and b chains.

The protein localises to the cell membrane. In terms of biological role, f(1)F(0) ATP synthase produces ATP from ADP in the presence of a proton or sodium gradient. F-type ATPases consist of two structural domains, F(1) containing the extramembraneous catalytic core and F(0) containing the membrane proton channel, linked together by a central stalk and a peripheral stalk. During catalysis, ATP synthesis in the catalytic domain of F(1) is coupled via a rotary mechanism of the central stalk subunits to proton translocation. Its function is as follows. Component of the F(0) channel, it forms part of the peripheral stalk, linking F(1) to F(0). In Desulfitobacterium hafniense (strain Y51), this protein is ATP synthase subunit b.